A 91-amino-acid polypeptide reads, in one-letter code: DNA-directed RNA polymerase subunit Rpo11 (91 aa).

Belongs to the archaeal Rpo11/eukaryotic RPB11/RPC19 RNA polymerase subunit family. As to quaternary structure, part of the RNA polymerase complex.

It is found in the cytoplasm. The catalysed reaction is RNA(n) + a ribonucleoside 5'-triphosphate = RNA(n+1) + diphosphate. DNA-dependent RNA polymerase (RNAP) catalyzes the transcription of DNA into RNA using the four ribonucleoside triphosphates as substrates. The sequence is that of DNA-directed RNA polymerase subunit Rpo11 from Methanococcoides burtonii (strain DSM 6242 / NBRC 107633 / OCM 468 / ACE-M).